Here is a 139-residue protein sequence, read N- to C-terminus: MIKRYEACFLFKSEEIEYKGSLEEVKKSLELYGATDIISNFIGERALEYPIKKQARGRYEIIEFSMEGNNLKEFESKLKLIKSLLRYMILVKIVRKINTKKIKRRNFREFKDNIDKENLKSGSKIEVPTSSESADIQEK.

Belongs to the bacterial ribosomal protein bS6 family.

Its function is as follows. Binds together with bS18 to 16S ribosomal RNA. The sequence is that of Small ribosomal subunit protein bS6 from Borreliella afzelii (strain PKo) (Borrelia afzelii).